The following is a 511-amino-acid chain: 2-isopropylmalate synthase (511 aa).

The 263-residue stretch at 5–267 (LFIFDTTLRD…DTRIDATQIV (263 aa)) folds into the Pyruvate carboxyltransferase domain. 4 residues coordinate Mn(2+): aspartate 14, histidine 202, histidine 204, and asparagine 238. The segment at 393–511 (KLLSMKVCSE…SKRERAHPQV (119 aa)) is regulatory domain.

Belongs to the alpha-IPM synthase/homocitrate synthase family. LeuA type 1 subfamily. As to quaternary structure, homodimer. Mn(2+) is required as a cofactor.

Its subcellular location is the cytoplasm. It carries out the reaction 3-methyl-2-oxobutanoate + acetyl-CoA + H2O = (2S)-2-isopropylmalate + CoA + H(+). It participates in amino-acid biosynthesis; L-leucine biosynthesis; L-leucine from 3-methyl-2-oxobutanoate: step 1/4. Its function is as follows. Catalyzes the condensation of the acetyl group of acetyl-CoA with 3-methyl-2-oxobutanoate (2-ketoisovalerate) to form 3-carboxy-3-hydroxy-4-methylpentanoate (2-isopropylmalate). This is 2-isopropylmalate synthase from Thiobacillus denitrificans (strain ATCC 25259 / T1).